The primary structure comprises 348 residues: Beta-hexosaminidase (348 aa).

Residues Asp-64, Arg-72, Arg-138, and 168–169 (KH) contribute to the substrate site. Residue His-181 is the Proton donor/acceptor of the active site. Asp-252 functions as the Nucleophile in the catalytic mechanism.

Belongs to the glycosyl hydrolase 3 family. NagZ subfamily.

Its subcellular location is the cytoplasm. It catalyses the reaction Hydrolysis of terminal non-reducing N-acetyl-D-hexosamine residues in N-acetyl-beta-D-hexosaminides.. It functions in the pathway cell wall biogenesis; peptidoglycan recycling. Plays a role in peptidoglycan recycling by cleaving the terminal beta-1,4-linked N-acetylglucosamine (GlcNAc) from peptide-linked peptidoglycan fragments, giving rise to free GlcNAc, anhydro-N-acetylmuramic acid and anhydro-N-acetylmuramic acid-linked peptides. The protein is Beta-hexosaminidase of Nitrosomonas eutropha (strain DSM 101675 / C91 / Nm57).